The following is a 270-amino-acid chain: 3-methyl-2-oxobutanoate hydroxymethyltransferase (270 aa).

Positions 41 and 80 each coordinate Mg(2+). Residues 41-42, aspartate 80, and lysine 109 each bind 3-methyl-2-oxobutanoate; that span reads DS. Glutamate 111 is a Mg(2+) binding site. Glutamate 178 functions as the Proton acceptor in the catalytic mechanism.

It belongs to the PanB family. Homodecamer; pentamer of dimers. It depends on Mg(2+) as a cofactor.

The protein localises to the cytoplasm. It carries out the reaction 3-methyl-2-oxobutanoate + (6R)-5,10-methylene-5,6,7,8-tetrahydrofolate + H2O = 2-dehydropantoate + (6S)-5,6,7,8-tetrahydrofolate. Its pathway is cofactor biosynthesis; (R)-pantothenate biosynthesis; (R)-pantoate from 3-methyl-2-oxobutanoate: step 1/2. Functionally, catalyzes the reversible reaction in which hydroxymethyl group from 5,10-methylenetetrahydrofolate is transferred onto alpha-ketoisovalerate to form ketopantoate. This is 3-methyl-2-oxobutanoate hydroxymethyltransferase from Thermotoga maritima (strain ATCC 43589 / DSM 3109 / JCM 10099 / NBRC 100826 / MSB8).